A 461-amino-acid chain; its full sequence is Phenolic glucoside malonyltransferase 1 (461 aa).

Histidine 167 serves as the catalytic Proton acceptor. The short motif at 167–171 (HAAQD) is the HXXXD motif element. Residue 281 to 282 (ST) coordinates malonyl-CoA. Catalysis depends on aspartate 400, which acts as the Proton acceptor. The DFGWG motif motif lies at 400 to 404 (DFGWG).

It belongs to the plant acyltransferase family. Phenolic glucoside malonyltransferase subfamily. In terms of tissue distribution, expressed in all tissues. Most highly expressed in the abdomen and especially in the gut.

It carries out the reaction a flavonol 3-O-beta-D-glucoside + malonyl-CoA = a flavonol 3-O-(6-O-malonyl-beta-D-glucoside) + CoA. It catalyses the reaction kaempferol 3-O-beta-D-glucoside + malonyl-CoA = kaempferol 3-O-(6-O-malonyl-beta-D-glucoside) + CoA. The enzyme catalyses quercetin 3-O-beta-D-glucoside + malonyl-CoA = quercetin 3-O-(6-O-malonyl-beta-D-glucoside) + CoA. The catalysed reaction is a flavonol 7-O-beta-D-glucoside + malonyl-CoA = a flavonol 7-O-(6-O-malonyl-beta-D-glucoside) + CoA. It carries out the reaction (2S)-naringenin 7-O-beta-D-glucoside + malonyl-CoA = (2S)-naringenin 7-O-(6-O-malonyl-beta-D-glucoside) + CoA. It catalyses the reaction kaempferol 7-O-beta-D-glucoside + malonyl-CoA = kaempferol 7-O-(6-O-malonyl-beta-D-glucoside) + CoA. The enzyme catalyses apigenin 7-O-beta-D-glucoside + malonyl-CoA = apigenin 7-O-(6-O-malonyl-beta-D-glucoside) + CoA. The catalysed reaction is rhaponticin + malonyl-CoA = 6-O-malonyl-rhaponticin + CoA. In terms of biological role, phenolic glucoside malonyltransferase that neutralizes phenolic glycosides in host plants. Catalyzes the transfer of a malonyl group from malonyl-CoA to the phenolic glycosides, leading to their detoxification. Phenolic glycosides, which are among the most abundant plant secondary metabolites, act as plant defense compounds: they strongly affect growth, development and behavior of insect herbivores. Has malonyltransferase activity against flavonoids kaempferol 3-O-glucoside, kaempferol 7-O-glucoside, isoquercetin (quercetin 3-O-beta-D-glucopyranoside), apigetrin (apigenin 7-O-beta-D-glucoside) and prunin (naringenin 7-O-beta-D-glucoside). Also has activity toward non-flavonoid rhaponticin, but with lower efficiency. The chain is Phenolic glucoside malonyltransferase 1 from Bemisia tabaci (Sweetpotato whitefly).